We begin with the raw amino-acid sequence, 140 residues long: MEIDYYDYEKLLEKAYQELPENVKHHKSRFEVPGALVTIEGNKTIIENFKDIADALNRDPQHLLKFLLREIATAGTLEGRRVVLQGRFTPYLIANKLKKYIKEYVICPVCGSPDTKIIKRDRFHFLKCEACGAETPIQHL.

Belongs to the eIF-2-beta/eIF-5 family. Heterotrimer composed of an alpha, a beta and a gamma chain.

Its function is as follows. eIF-2 functions in the early steps of protein synthesis by forming a ternary complex with GTP and initiator tRNA. The protein is Translation initiation factor 2 subunit beta of Pyrococcus furiosus (strain ATCC 43587 / DSM 3638 / JCM 8422 / Vc1).